The primary structure comprises 197 residues: Ribosome maturation factor RimP (197 aa).

Belongs to the RimP family.

The protein resides in the cytoplasm. Functionally, required for maturation of 30S ribosomal subunits. This is Ribosome maturation factor RimP from Acidovorax ebreus (strain TPSY) (Diaphorobacter sp. (strain TPSY)).